Reading from the N-terminus, the 166-residue chain is Thiamine precursor transporter HmpT (166 aa).

5 helical membrane-spanning segments follow: residues 14–34, 35–55, 62–82, 105–125, and 126–146; these read LLAIWTALTFVLGRLFTFPIP, GSAGNILTLLDVGIYTAVFLF, IIGGFAAFLLDLTAGFSNYMF, FLLSLLVMVGGYFIVGGLMYG, and WGSAIAGLWVNIVQVIVGFVL.

In E.coli forms a stable energy-coupling factor (ECF) transporter complex composed of 2 membrane-embedded substrate-binding protein (S component), 2 ATP-binding proteins (A and A' components) and 2 transmembrane proteins (T component), probably with a stoichiometry of 2:1:1:2. May be able to interact with more than 1 S component at a time.

It localises to the cell membrane. Functionally, probably a thiamine precursor-binding protein that interacts with the energy-coupling factor (ECF) ABC-transporter complex. Unlike classic ABC transporters this ECF transporter provides the energy necessary to transport a number of different substrates. The substrates themselves are bound by transmembrane, not extracytoplasmic soluble proteins. The chain is Thiamine precursor transporter HmpT (hmpT) from Lactococcus lactis subsp. cremoris (strain MG1363).